Here is a 366-residue protein sequence, read N- to C-terminus: Cobalt-precorrin-5B C(1)-methyltransferase (366 aa).

The protein belongs to the CbiD family.

The catalysed reaction is Co-precorrin-5B + S-adenosyl-L-methionine = Co-precorrin-6A + S-adenosyl-L-homocysteine. It functions in the pathway cofactor biosynthesis; adenosylcobalamin biosynthesis; cob(II)yrinate a,c-diamide from sirohydrochlorin (anaerobic route): step 6/10. Catalyzes the methylation of C-1 in cobalt-precorrin-5B to form cobalt-precorrin-6A. This is Cobalt-precorrin-5B C(1)-methyltransferase from Pseudomonas aeruginosa (strain LESB58).